A 693-amino-acid polypeptide reads, in one-letter code: Elongation factor G (693 aa).

The tr-type G domain maps to 8–282 (EHTRNIGIMA…AVIDFMPSPT (275 aa)). Residues 17 to 24 (AHIDAGKT), 81 to 85 (DTPGH), and 135 to 138 (NKMD) contribute to the GTP site.

This sequence belongs to the TRAFAC class translation factor GTPase superfamily. Classic translation factor GTPase family. EF-G/EF-2 subfamily.

It localises to the cytoplasm. Functionally, catalyzes the GTP-dependent ribosomal translocation step during translation elongation. During this step, the ribosome changes from the pre-translocational (PRE) to the post-translocational (POST) state as the newly formed A-site-bound peptidyl-tRNA and P-site-bound deacylated tRNA move to the P and E sites, respectively. Catalyzes the coordinated movement of the two tRNA molecules, the mRNA and conformational changes in the ribosome. The protein is Elongation factor G of Ruminiclostridium cellulolyticum (strain ATCC 35319 / DSM 5812 / JCM 6584 / H10) (Clostridium cellulolyticum).